The chain runs to 278 residues: Urease accessory protein UreD 3 (278 aa).

The protein belongs to the UreD family. As to quaternary structure, ureD, UreF and UreG form a complex that acts as a GTP-hydrolysis-dependent molecular chaperone, activating the urease apoprotein by helping to assemble the nickel containing metallocenter of UreC. The UreE protein probably delivers the nickel.

The protein localises to the cytoplasm. Its function is as follows. Required for maturation of urease via the functional incorporation of the urease nickel metallocenter. The chain is Urease accessory protein UreD 3 from Bradyrhizobium sp. (strain BTAi1 / ATCC BAA-1182).